The chain runs to 334 residues: Probable peptidoglycan endopeptidase LytE (334 aa).

The first 25 residues, 1–25, serve as a signal peptide directing secretion; sequence MKKQIITATTAVVLGSTLFAGAASA. LysM domains lie at 26–69, 86–129, and 149–192; these read QSIK…TLSI, STYK…VLKL, and STYK…VLKV. Disordered regions lie at residues 70-89, 131-153, and 195-215; these read NGKS…STYK, GSTS…TYKV, and TSTS…KTSS. 2 stretches are compositionally biased toward low complexity: residues 72-87 and 132-153; these read KSTS…SSST and STSS…TYKV. The 118-residue stretch at 217 to 334 folds into the NlpC/P60 domain; sequence SLNVSKLVSD…KPRYLGAKRF (118 aa). The Nucleophile role is filled by Cys-247. Residue His-296 is the Proton acceptor of the active site. The active site involves His-308.

It belongs to the peptidase C40 family.

It localises to the secreted. The protein resides in the cell wall. Functionally, cell wall hydrolase that cleaves gamma-D-glutamate-meso-diaminopimelate bonds in peptidoglycan. Seems to play a role in cell separation during vegetative growth. This chain is Probable peptidoglycan endopeptidase LytE (lytE), found in Bacillus subtilis (strain 168).